A 337-amino-acid chain; its full sequence is Anthranilate phosphoribosyltransferase (337 aa).

Residues glycine 80, 83-84 (GD), threonine 88, 90-93 (NIST), 108-116 (KHGNRSVSS), and serine 120 contribute to the 5-phospho-alpha-D-ribose 1-diphosphate site. Glycine 80 serves as a coordination point for anthranilate. Serine 92 contacts Mg(2+). Asparagine 111 serves as a coordination point for anthranilate. Anthranilate is bound at residue arginine 166. Mg(2+) is bound by residues aspartate 225 and glutamate 226.

The protein belongs to the anthranilate phosphoribosyltransferase family. Homodimer. Requires Mg(2+) as cofactor.

It catalyses the reaction N-(5-phospho-beta-D-ribosyl)anthranilate + diphosphate = 5-phospho-alpha-D-ribose 1-diphosphate + anthranilate. It participates in amino-acid biosynthesis; L-tryptophan biosynthesis; L-tryptophan from chorismate: step 2/5. In terms of biological role, catalyzes the transfer of the phosphoribosyl group of 5-phosphorylribose-1-pyrophosphate (PRPP) to anthranilate to yield N-(5'-phosphoribosyl)-anthranilate (PRA). The sequence is that of Anthranilate phosphoribosyltransferase from Syntrophobacter fumaroxidans (strain DSM 10017 / MPOB).